The sequence spans 160 residues: ATP synthase subunit b (160 aa).

A helical membrane pass occupies residues 13-33 (VNLAIVIGVLVWFLRGFLGGI).

The protein belongs to the ATPase B chain family. F-type ATPases have 2 components, F(1) - the catalytic core - and F(0) - the membrane proton channel. F(1) has five subunits: alpha(3), beta(3), gamma(1), delta(1), epsilon(1). F(0) has four main subunits: a(1), b(1), b'(1) and c(10-14). The alpha and beta chains form an alternating ring which encloses part of the gamma chain. F(1) is attached to F(0) by a central stalk formed by the gamma and epsilon chains, while a peripheral stalk is formed by the delta, b and b' chains.

It localises to the cellular thylakoid membrane. In terms of biological role, f(1)F(0) ATP synthase produces ATP from ADP in the presence of a proton or sodium gradient. F-type ATPases consist of two structural domains, F(1) containing the extramembraneous catalytic core and F(0) containing the membrane proton channel, linked together by a central stalk and a peripheral stalk. During catalysis, ATP synthesis in the catalytic domain of F(1) is coupled via a rotary mechanism of the central stalk subunits to proton translocation. Component of the F(0) channel, it forms part of the peripheral stalk, linking F(1) to F(0). In Parasynechococcus marenigrum (strain WH8102), this protein is ATP synthase subunit b.